Reading from the N-terminus, the 156-residue chain is Small ribosomal subunit protein uS7 (156 aa).

Belongs to the universal ribosomal protein uS7 family. In terms of assembly, part of the 30S ribosomal subunit. Contacts proteins S9 and S11.

In terms of biological role, one of the primary rRNA binding proteins, it binds directly to 16S rRNA where it nucleates assembly of the head domain of the 30S subunit. Is located at the subunit interface close to the decoding center, probably blocks exit of the E-site tRNA. The sequence is that of Small ribosomal subunit protein uS7 from Paraburkholderia phymatum (strain DSM 17167 / CIP 108236 / LMG 21445 / STM815) (Burkholderia phymatum).